Here is a 162-residue protein sequence, read N- to C-terminus: G/U mismatch-specific DNA glycosylase (162 aa).

Belongs to the uracil-DNA glycosylase (UDG) superfamily. TDG/mug family. Binds DNA as a monomer.

It localises to the cytoplasm. The enzyme catalyses Specifically hydrolyzes mismatched double-stranded DNA and polynucleotides, releasing free uracil.. Excises ethenocytosine and uracil, which can arise by alkylation or deamination of cytosine, respectively, from the corresponding mispairs with guanine in ds-DNA. It is capable of hydrolyzing the carbon-nitrogen bond between the sugar-phosphate backbone of the DNA and the mispaired base. The complementary strand guanine functions in substrate recognition. Required for DNA damage lesion repair in stationary-phase cells. In Serratia marcescens, this protein is G/U mismatch-specific DNA glycosylase.